The sequence spans 270 residues: Phosphatidate cytidylyltransferase (270 aa).

Helical transmembrane passes span L19–A39, T53–L73, G76–W96, G101–R121, F126–Y146, L183–L203, and A248–F268.

Belongs to the CDS family.

Its subcellular location is the cell inner membrane. It catalyses the reaction a 1,2-diacyl-sn-glycero-3-phosphate + CTP + H(+) = a CDP-1,2-diacyl-sn-glycerol + diphosphate. Its pathway is phospholipid metabolism; CDP-diacylglycerol biosynthesis; CDP-diacylglycerol from sn-glycerol 3-phosphate: step 3/3. The sequence is that of Phosphatidate cytidylyltransferase (cdsA) from Brucella melitensis biotype 1 (strain ATCC 23456 / CCUG 17765 / NCTC 10094 / 16M).